We begin with the raw amino-acid sequence, 330 residues long: tRNA-modifying protein YgfZ (330 aa).

Residues Trp-28 and Trp-192 each contribute to the folate site.

It belongs to the tRNA-modifying YgfZ family.

It localises to the cytoplasm. Functionally, folate-binding protein involved in regulating the level of ATP-DnaA and in the modification of some tRNAs. It is probably a key factor in regulatory networks that act via tRNA modification, such as initiation of chromosomal replication. This chain is tRNA-modifying protein YgfZ, found in Blochmanniella pennsylvanica (strain BPEN).